We begin with the raw amino-acid sequence, 971 residues long: Translation initiation factor IF-2 (971 aa).

Residues 48–63 (DHLRKSHGATDGDKRK) show a composition bias toward basic and acidic residues. 2 disordered regions span residues 48 to 86 (DHLR…ARTI) and 100 to 381 (DDVA…STFQ). The segment covering 105-114 (GADQGQAQVA) has biased composition (low complexity). The span at 121–181 (ELKRREEEAR…EEEAATKRAA (61 aa)) shows a compositional bias: basic and acidic residues. Low complexity predominate over residues 182 to 202 (AEVAAAQQQAAAQQAAAEQEA). Positions 210 to 261 (DEARAAAERAAQREAAKKAEDAAREAADKARAEQEEISKRRAAAEAEARAIR) are enriched in basic and acidic residues. Positions 277–286 (PPKPVEPPKP) are enriched in pro residues. The span at 304–326 (ARPAVKKPAGAAAPATTQAPAGA) shows a compositional bias: low complexity. Residues 356–369 (SSGGVDRGWRGGPK) show a composition bias toward gly residues. In terms of domain architecture, tr-type G spans 471–640 (PRPPVVTVMG…LLQAEVLELK (170 aa)). The G1 stretch occupies residues 480-487 (GHVDHGKT). Position 480–487 (480–487 (GHVDHGKT)) interacts with GTP. The G2 stretch occupies residues 505 to 509 (GITQH). Residues 526–529 (DTPG) form a G3 region. GTP is bound by residues 526–530 (DTPGH) and 580–583 (NKID). The tract at residues 580 to 583 (NKID) is G4. Positions 616–618 (SAK) are G5.

It belongs to the TRAFAC class translation factor GTPase superfamily. Classic translation factor GTPase family. IF-2 subfamily.

It localises to the cytoplasm. Its function is as follows. One of the essential components for the initiation of protein synthesis. Protects formylmethionyl-tRNA from spontaneous hydrolysis and promotes its binding to the 30S ribosomal subunits. Also involved in the hydrolysis of GTP during the formation of the 70S ribosomal complex. The protein is Translation initiation factor IF-2 of Burkholderia orbicola (strain AU 1054).